Here is a 569-residue protein sequence, read N- to C-terminus: Intraflagellar transport protein 74/72 (569 aa).

Coiled-coil stretches lie at residues 75–156 (ITAT…TRNE), 201–231 (YRSL…VAAN), and 271–298 (AITL…AESH).

The protein belongs to the IFT74 family.

The protein resides in the cell projection. It is found in the cilium. It localises to the flagellum. Its subcellular location is the cytoplasm. The protein localises to the cytoskeleton. The protein resides in the flagellum axoneme. It is found in the flagellum basal body. In terms of biological role, component of the intraflagellar transport complex B (IFT-B) involved in flagellar assembly. The chain is Intraflagellar transport protein 74/72 from Giardia intestinalis (strain ATCC 50803 / WB clone C6) (Giardia lamblia).